A 380-amino-acid chain; its full sequence is Tryptophan 2,3-dioxygenase (380 aa).

Substrate is bound by residues 57–61 and arginine 128; that span reads FIITH. Position 313 (histidine 313) interacts with heme. Position 328 (threonine 328) interacts with substrate.

This sequence belongs to the tryptophan 2,3-dioxygenase family. In terms of assembly, homotetramer. Dimer of dimers. Heme serves as cofactor.

It catalyses the reaction L-tryptophan + O2 = N-formyl-L-kynurenine. Its pathway is amino-acid degradation; L-tryptophan degradation via kynurenine pathway; L-kynurenine from L-tryptophan: step 1/2. It participates in pigment biosynthesis; ommochrome biosynthesis. Its function is as follows. Heme-dependent dioxygenase that catalyzes the oxidative cleavage of the L-tryptophan (L-Trp) pyrrole ring and converts L-tryptophan to N-formyl-L-kynurenine. Catalyzes the oxidative cleavage of the indole moiety. This Drosophila willistoni (Fruit fly) protein is Tryptophan 2,3-dioxygenase.